The following is a 318-amino-acid chain: N-succinylornithine carbamoyltransferase (318 aa).

Carbamoyl phosphate-binding positions include 47-50, tryptophan 75, and arginine 110; that span reads SLRT. Glutamate 142 is a N(2)-succinyl-L-ornithine binding site. 147–150 contributes to the carbamoyl phosphate binding site; that stretch reads HPLQ. Positions 176 and 236 each coordinate N(2)-succinyl-L-ornithine. 274–275 lines the carbamoyl phosphate pocket; the sequence is CL. N(2)-succinyl-L-ornithine is bound at residue arginine 278. Arginine 302 lines the carbamoyl phosphate pocket.

The protein belongs to the aspartate/ornithine carbamoyltransferase superfamily. SOTCase family. In terms of assembly, homotrimer.

The enzyme catalyses N(2)-succinyl-L-ornithine + carbamoyl phosphate = N(2)-succinyl-L-citrulline + phosphate + H(+). Its pathway is amino-acid biosynthesis; L-arginine biosynthesis. In terms of biological role, catalyzes the transfer of the carbamoyl group from carbamoyl phosphate to the delta-amino group of N(2)-succinyl-L-ornithine to produce N(2)-succinyl-L-citrulline. Is essential for arginine biosynthesis. Has no activity with either L-ornithine or L-aspartate as substrate. Also has no detectable AOTCase activity, being unable to convert N(2)-acetyl-L-ornithine to N(2)-acetyl-L-citrulline. This is N-succinylornithine carbamoyltransferase from Bacteroides thetaiotaomicron (strain ATCC 29148 / DSM 2079 / JCM 5827 / CCUG 10774 / NCTC 10582 / VPI-5482 / E50).